The sequence spans 382 residues: UDP-N-acetylglucosamine--N-acetylmuramyl-(pentapeptide) pyrophosphoryl-undecaprenol N-acetylglucosamine transferase (382 aa).

UDP-N-acetyl-alpha-D-glucosamine-binding positions include 17–19, Asn-137, Arg-179, Ser-213, and Gln-308; that span reads TAG.

This sequence belongs to the glycosyltransferase 28 family. MurG subfamily.

The protein resides in the cell membrane. It carries out the reaction di-trans,octa-cis-undecaprenyl diphospho-N-acetyl-alpha-D-muramoyl-L-alanyl-D-glutamyl-meso-2,6-diaminopimeloyl-D-alanyl-D-alanine + UDP-N-acetyl-alpha-D-glucosamine = di-trans,octa-cis-undecaprenyl diphospho-[N-acetyl-alpha-D-glucosaminyl-(1-&gt;4)]-N-acetyl-alpha-D-muramoyl-L-alanyl-D-glutamyl-meso-2,6-diaminopimeloyl-D-alanyl-D-alanine + UDP + H(+). The protein operates within cell wall biogenesis; peptidoglycan biosynthesis. In terms of biological role, cell wall formation. Catalyzes the transfer of a GlcNAc subunit on undecaprenyl-pyrophosphoryl-MurNAc-pentapeptide (lipid intermediate I) to form undecaprenyl-pyrophosphoryl-MurNAc-(pentapeptide)GlcNAc (lipid intermediate II). This is UDP-N-acetylglucosamine--N-acetylmuramyl-(pentapeptide) pyrophosphoryl-undecaprenol N-acetylglucosamine transferase from Rhodococcus opacus (strain B4).